The primary structure comprises 422 residues: MSRRYLFSSESVTEGHPDKICDQISDTILDALLYHDDHSRVAAEVVVNTGLVLITGEITSKAHVNFVELARKKIAEIGYTDADNGFSANSCAVLVAIDEQSPDISQGVSAAHEQRESLSNDELDQIGAGDQGIMFGYACNETPEFMPLPISLAHRISRRLAAVRKMGELPYLRPDGKTQVSIVYEDGKPVGIDTILISTQHTETIDSLTENSAVQAKIKSDLWEAVVQPVFGDIEIKPNQDTRFLVNPTGKFVIGGPQGDAGLTGRKIIVDTYGGYSRHGGGAFSGKDPTKVDRSAAYACRYVAKNIVAAGLADKCEVQVSYAIGVARPVSILVETFGTGKVDEDKLLKVVQELFELRPAGILQTLNLRELPSQRGGRFYQDVAAYGHFGRTDLDLPWEYTDKANLLKEAFAIPLSEVRVGV.

An ATP-binding site is contributed by His16. A Mg(2+)-binding site is contributed by Asp18. Glu44 serves as a coordination point for K(+). L-methionine contacts are provided by Glu57 and Gln100. Residues 100 to 110 (QSPDISQGVSA) are flexible loop. ATP contacts are provided by residues 175 to 177 (DGK), 251 to 252 (KF), Asp260, 266 to 267 (RK), Ala283, and Lys287. Residue Asp260 participates in L-methionine binding. Lys291 serves as a coordination point for L-methionine.

Belongs to the AdoMet synthase family. As to quaternary structure, homotetramer; dimer of dimers. Mg(2+) is required as a cofactor. K(+) serves as cofactor.

It is found in the cytoplasm. It catalyses the reaction L-methionine + ATP + H2O = S-adenosyl-L-methionine + phosphate + diphosphate. It participates in amino-acid biosynthesis; S-adenosyl-L-methionine biosynthesis; S-adenosyl-L-methionine from L-methionine: step 1/1. Its function is as follows. Catalyzes the formation of S-adenosylmethionine (AdoMet) from methionine and ATP. The overall synthetic reaction is composed of two sequential steps, AdoMet formation and the subsequent tripolyphosphate hydrolysis which occurs prior to release of AdoMet from the enzyme. This is S-adenosylmethionine synthase from Rippkaea orientalis (strain PCC 8801 / RF-1) (Cyanothece sp. (strain PCC 8801)).